Here is a 363-residue protein sequence, read N- to C-terminus: 3-isopropylmalate dehydrogenase (363 aa).

79–92 is an NAD(+) binding site; that stretch reads GPKWEHLPPNEQPE. 4 residues coordinate substrate: Arg100, Arg110, Arg139, and Asp228. The Mg(2+) site is built by Asp228, Asp252, and Asp256. 286–298 is a binding site for NAD(+); that stretch reads GSAPDIAGKNIAN.

It belongs to the isocitrate and isopropylmalate dehydrogenases family. LeuB type 1 subfamily. In terms of assembly, homodimer. Requires Mg(2+) as cofactor. Mn(2+) is required as a cofactor.

The protein localises to the cytoplasm. It carries out the reaction (2R,3S)-3-isopropylmalate + NAD(+) = 4-methyl-2-oxopentanoate + CO2 + NADH. It participates in amino-acid biosynthesis; L-leucine biosynthesis; L-leucine from 3-methyl-2-oxobutanoate: step 3/4. In terms of biological role, catalyzes the oxidation of 3-carboxy-2-hydroxy-4-methylpentanoate (3-isopropylmalate) to 3-carboxy-4-methyl-2-oxopentanoate. The product decarboxylates to 4-methyl-2 oxopentanoate. The chain is 3-isopropylmalate dehydrogenase from Vibrio cholerae serotype O1 (strain ATCC 39315 / El Tor Inaba N16961).